Consider the following 260-residue polypeptide: UPF0246 protein Bcep18194_A5551 (260 aa).

The protein belongs to the UPF0246 family.

This Burkholderia lata (strain ATCC 17760 / DSM 23089 / LMG 22485 / NCIMB 9086 / R18194 / 383) protein is UPF0246 protein Bcep18194_A5551.